A 706-amino-acid chain; its full sequence is Fatty acid oxidation complex subunit alpha (706 aa).

The segment at 1–188 (MEKTFSLSRR…KMGLVDDVVP (188 aa)) is enoyl-CoA hydratase. The interval 308-706 (RKVAKAVVLG…AMAAEGKTFY (399 aa)) is 3-hydroxyacyl-CoA dehydrogenase.

This sequence in the N-terminal section; belongs to the enoyl-CoA hydratase/isomerase family. It in the central section; belongs to the 3-hydroxyacyl-CoA dehydrogenase family. Heterotetramer of two alpha chains (FadJ) and two beta chains (FadI).

The protein resides in the cytoplasm. It catalyses the reaction a (3S)-3-hydroxyacyl-CoA = a (2E)-enoyl-CoA + H2O. The catalysed reaction is a 4-saturated-(3S)-3-hydroxyacyl-CoA = a (3E)-enoyl-CoA + H2O. The enzyme catalyses a (3S)-3-hydroxyacyl-CoA + NAD(+) = a 3-oxoacyl-CoA + NADH + H(+). It carries out the reaction (3S)-3-hydroxybutanoyl-CoA = (3R)-3-hydroxybutanoyl-CoA. It functions in the pathway lipid metabolism; fatty acid beta-oxidation. Functionally, catalyzes the formation of a hydroxyacyl-CoA by addition of water on enoyl-CoA. Also exhibits 3-hydroxyacyl-CoA epimerase and 3-hydroxyacyl-CoA dehydrogenase activities. The chain is Fatty acid oxidation complex subunit alpha from Shewanella amazonensis (strain ATCC BAA-1098 / SB2B).